Reading from the N-terminus, the 68-residue chain is Large ribosomal subunit protein uL29 (68 aa).

The protein belongs to the universal ribosomal protein uL29 family.

The sequence is that of Large ribosomal subunit protein uL29 from Prochlorococcus marinus (strain SARG / CCMP1375 / SS120).